The chain runs to 179 residues: MLRFKELYQQKIIENLQKEFSYKSKHEIPQIKKIVINMGVGEAIADSKVINNAVNDLTLISGQKPVVTLARKSIATFKLRESMKIGCKVTLRKDRMYDFLERLVIVALPRVKEFRGFSYKSFDGKGNFTFGLKEQIVFPEINYDKIDTIRGMDITIVTSAKTDKESKFLLSGFNLPFYN.

This sequence belongs to the universal ribosomal protein uL5 family. As to quaternary structure, part of the 50S ribosomal subunit; part of the 5S rRNA/L5/L18/L25 subcomplex. Contacts the 5S rRNA and the P site tRNA. Forms a bridge to the 30S subunit in the 70S ribosome.

Functionally, this is one of the proteins that bind and probably mediate the attachment of the 5S RNA into the large ribosomal subunit, where it forms part of the central protuberance. In the 70S ribosome it contacts protein S13 of the 30S subunit (bridge B1b), connecting the 2 subunits; this bridge is implicated in subunit movement. Contacts the P site tRNA; the 5S rRNA and some of its associated proteins might help stabilize positioning of ribosome-bound tRNAs. The chain is Large ribosomal subunit protein uL5 from Rickettsia felis (strain ATCC VR-1525 / URRWXCal2) (Rickettsia azadi).